A 320-amino-acid chain; its full sequence is Ribonuclease Z (320 aa).

The Zn(2+) site is built by H63, H65, D67, H68, H141, D212, and H270. D67 acts as the Proton acceptor in catalysis.

The protein belongs to the RNase Z family. In terms of assembly, homodimer. Requires Zn(2+) as cofactor.

The catalysed reaction is Endonucleolytic cleavage of RNA, removing extra 3' nucleotides from tRNA precursor, generating 3' termini of tRNAs. A 3'-hydroxy group is left at the tRNA terminus and a 5'-phosphoryl group is left at the trailer molecule.. Functionally, zinc phosphodiesterase, which displays some tRNA 3'-processing endonuclease activity. Probably involved in tRNA maturation, by removing a 3'-trailer from precursor tRNA. This chain is Ribonuclease Z, found in Lacticaseibacillus casei (strain BL23) (Lactobacillus casei).